The chain runs to 179 residues: Adenine phosphoribosyltransferase (179 aa).

The protein belongs to the purine/pyrimidine phosphoribosyltransferase family. As to quaternary structure, homodimer.

Its subcellular location is the cytoplasm. The catalysed reaction is AMP + diphosphate = 5-phospho-alpha-D-ribose 1-diphosphate + adenine. Its pathway is purine metabolism; AMP biosynthesis via salvage pathway; AMP from adenine: step 1/1. In terms of biological role, catalyzes a salvage reaction resulting in the formation of AMP, that is energically less costly than de novo synthesis. The sequence is that of Adenine phosphoribosyltransferase from Nitrobacter hamburgensis (strain DSM 10229 / NCIMB 13809 / X14).